The sequence spans 387 residues: Mannitol-1-phosphate 5-dehydrogenase (387 aa).

3 to 14 (ALHFGAGNIGRG) serves as a coordination point for NAD(+).

This sequence belongs to the mannitol dehydrogenase family.

The catalysed reaction is D-mannitol 1-phosphate + NAD(+) = beta-D-fructose 6-phosphate + NADH + H(+). The protein is Mannitol-1-phosphate 5-dehydrogenase of Yersinia pseudotuberculosis serotype IB (strain PB1/+).